Here is a 274-residue protein sequence, read N- to C-terminus: Penicillin-insensitive murein endopeptidase (274 aa).

A signal peptide spans 1-19 (MNKTAIALLALLASSASLA). Disulfide bonds link Cys44/Cys265, Cys187/Cys235, and Cys216/Cys223. Positions 110, 113, 120, 147, 150, and 211 each coordinate Zn(2+).

Belongs to the peptidase M74 family. Dimer. Requires Zn(2+) as cofactor.

It localises to the periplasm. Murein endopeptidase that cleaves the D-alanyl-meso-2,6-diamino-pimelyl amide bond that connects peptidoglycan strands. Likely plays a role in the removal of murein from the sacculus. The polypeptide is Penicillin-insensitive murein endopeptidase (Shigella sonnei (strain Ss046)).